A 350-amino-acid chain; its full sequence is tRNA uridine(34) hydroxylase (350 aa).

Positions 146–240 (DDPDALFIDM…YARKAREQGL (95 aa)) constitute a Rhodanese domain. Residue cysteine 200 is the Cysteine persulfide intermediate of the active site.

This sequence belongs to the TrhO family.

The catalysed reaction is uridine(34) in tRNA + AH2 + O2 = 5-hydroxyuridine(34) in tRNA + A + H2O. Its function is as follows. Catalyzes oxygen-dependent 5-hydroxyuridine (ho5U) modification at position 34 in tRNAs. The chain is tRNA uridine(34) hydroxylase from Escherichia fergusonii (strain ATCC 35469 / DSM 13698 / CCUG 18766 / IAM 14443 / JCM 21226 / LMG 7866 / NBRC 102419 / NCTC 12128 / CDC 0568-73).